A 217-amino-acid chain; its full sequence is Large ribosomal subunit protein bL25 (217 aa).

The disordered stretch occupies residues 178–217; that stretch reads VVAPTEEPTEEEIEAMEGEQQTEEPEVVGESKEDEEKTEE. Residues 184-205 show a composition bias toward acidic residues; that stretch reads EPTEEEIEAMEGEQQTEEPEVV. Residues 206-217 are compositionally biased toward basic and acidic residues; sequence GESKEDEEKTEE.

The protein belongs to the bacterial ribosomal protein bL25 family. CTC subfamily. As to quaternary structure, part of the 50S ribosomal subunit; part of the 5S rRNA/L5/L18/L25 subcomplex. Contacts the 5S rRNA. Binds to the 5S rRNA independently of L5 and L18.

Functionally, this is one of the proteins that binds to the 5S RNA in the ribosome where it forms part of the central protuberance. The chain is Large ribosomal subunit protein bL25 from Staphylococcus aureus (strain MRSA252).